Reading from the N-terminus, the 378-residue chain is Putative UDP-N-acetylglucosamine 2-epimerase (378 aa).

Belongs to the UDP-N-acetylglucosamine 2-epimerase family.

It is found in the cytoplasm. The enzyme catalyses UDP-N-acetyl-alpha-D-glucosamine = UDP-N-acetyl-alpha-D-mannosamine. This Thermotoga maritima (strain ATCC 43589 / DSM 3109 / JCM 10099 / NBRC 100826 / MSB8) protein is Putative UDP-N-acetylglucosamine 2-epimerase.